A 187-amino-acid polypeptide reads, in one-letter code: UPF0301 protein SG2023 (187 aa).

Belongs to the UPF0301 (AlgH) family.

This Sodalis glossinidius (strain morsitans) protein is UPF0301 protein SG2023.